Reading from the N-terminus, the 589-residue chain is MPQSRTHSRTATKHIFVSGGVASSLGKGLTASSLGQLLTARGMRVTMQKLDPYLNVDPGTMNPFQHGEVFVTEDGAETDLDVGHYERFLDRDLSGQANVTTGQVYSTVIAKERRGEYLGDTVQVIPHITDEIKSRILAMSGPDLQGHRPDVVITEIGGTVGDIESQPFLEAARQVRHDVGRDNVFFLHVSLVPYLAPSGELKTKPTQHSVAALRNIGIQPDALILRCDREVPPALKNKIALMCDVDVDGCISTPDAPSIYDIPKVLHSEGLDAYVVRQLGLPFRDVDWTVWGNLLERVHQPRETVRIALVGKYVDLPDAYLSVTEALRAGGFANRSKVEISWVPSDACETEAGAQAALGDVDGVLIPGGFGIRGIEGKLGAIRYARHRKTPLLGLCLGLQCVVIEAARSVGLDDANSAEFEPETTHPVISTMADQEDVIAGEADLGGTMRLGAYPAVLAKGSVVARAYGSEEVSERHRHRYEVNNAYRDRIAKSGLRFSGTSPDGHLVEFVEYPADQHPFFVATQAHPELKSRPTRPHPLFAAFVDAALRHKLEERLPVDVHGEERAAADDEIAESADRDEVASVDSAG.

The segment at 1 to 281 (MPQSRTHSRT…DAYVVRQLGL (281 aa)) is amidoligase domain. Residue Ser23 coordinates CTP. Ser23 contributes to the UTP binding site. ATP-binding positions include 24–29 (SLGKGL) and Asp81. Positions 81 and 155 each coordinate Mg(2+). Residues 162 to 164 (DIE), 202 to 207 (KTKPTQ), and Lys238 contribute to the CTP site. UTP contacts are provided by residues 202–207 (KTKPTQ) and Lys238. The 249-residue stretch at 306–554 (RIALVGKYVD…VDAALRHKLE (249 aa)) folds into the Glutamine amidotransferase type-1 domain. Residue Gly369 coordinates L-glutamine. Catalysis depends on Cys396, which acts as the Nucleophile; for glutamine hydrolysis. L-glutamine is bound by residues 397–400 (LGLQ), Glu419, and Arg480. Residues His527 and Glu529 contribute to the active site. Residues 562-589 (HGEERAAADDEIAESADRDEVASVDSAG) form a disordered region.

The protein belongs to the CTP synthase family. As to quaternary structure, homotetramer.

It carries out the reaction UTP + L-glutamine + ATP + H2O = CTP + L-glutamate + ADP + phosphate + 2 H(+). It catalyses the reaction L-glutamine + H2O = L-glutamate + NH4(+). The catalysed reaction is UTP + NH4(+) + ATP = CTP + ADP + phosphate + 2 H(+). It participates in pyrimidine metabolism; CTP biosynthesis via de novo pathway; CTP from UDP: step 2/2. Allosterically activated by GTP, when glutamine is the substrate; GTP has no effect on the reaction when ammonia is the substrate. The allosteric effector GTP functions by stabilizing the protein conformation that binds the tetrahedral intermediate(s) formed during glutamine hydrolysis. Inhibited by the product CTP, via allosteric rather than competitive inhibition. Functionally, catalyzes the ATP-dependent amination of UTP to CTP with either L-glutamine or ammonia as the source of nitrogen. Regulates intracellular CTP levels through interactions with the four ribonucleotide triphosphates. The polypeptide is CTP synthase (Rhodococcus opacus (strain B4)).